Consider the following 382-residue polypeptide: GDP-mannose-dependent alpha-(1-6)-phosphatidylinositol monomannoside mannosyltransferase (382 aa).

Residues Arg200, Lys205, Ile257, and Glu294 each contribute to the GDP-alpha-D-mannose site.

It belongs to the glycosyltransferase group 1 family. Glycosyltransferase 4 subfamily.

It carries out the reaction a 1,2-diacyl-sn-glycero-3-phospho-[alpha-D-mannopyranosyl-(1&lt;-&gt;6)-D-myo-inositol] + GDP-alpha-D-mannose = a 2,6-O-bis(alpha-D-mannopyranosyl)-1-phosphatidyl-1D-myo-inositol + GDP + H(+). The catalysed reaction is a 1,2-diacyl-sn-glycero-3-phospho-[alpha-D-6-acyl-mannopyranosyl-(1&lt;-&gt;6)-D-myo-inositol] + GDP-alpha-D-mannose = a 2-O-(alpha-D-mannosyl)-6-O-(6-O-acyl-alpha-D-mannosyl)-1-phosphatidyl-1D-myo-inositol + GDP + H(+). The protein operates within phospholipid metabolism; phosphatidylinositol metabolism. Involved in the biosynthesis of phosphatidyl-myo-inositol mannosides (PIM) which are early precursors in the biosynthesis of lipomannans (LM) and lipoarabinomannans (LAM). Catalyzes the addition of a mannosyl residue from GDP-D-mannose (GDP-Man) to the position 6 of a phosphatidyl-myo-inositol bearing an alpha-1,2-linked mannose residue (PIM1) to generate phosphatidyl-myo-inositol bearing alpha-1,2- and alpha-1,6-linked mannose residues (Ac1PIM2). PimB also catalyzes the addition of a mannosyl residue from GDP-Man to the position 6 of phosphatidyl-myo-inositol bearing an acylated alpha-1,2-linked mannose residue (Ac1PIM1) to generate monoacylated phosphatidyl-myo-inositol bearing alpha-1,2- and alpha-1,6-linked mannose residues (Ac1PIM2). The addition of the second mannosyl residue by PimB preferentially occurs before the acylation of the mannosyl residue transferred by PimA. Also able to transfer a mannosyl residue from GDP-Man to the position 6 of a phosphatidyl-myo-inositol (PI), but this reaction is very slow. The sequence is that of GDP-mannose-dependent alpha-(1-6)-phosphatidylinositol monomannoside mannosyltransferase from Mycolicibacterium smegmatis (strain ATCC 700084 / mc(2)155) (Mycobacterium smegmatis).